A 104-amino-acid polypeptide reads, in one-letter code: Large ribosomal subunit protein uL24 (104 aa).

This sequence belongs to the universal ribosomal protein uL24 family. As to quaternary structure, part of the 50S ribosomal subunit.

In terms of biological role, one of two assembly initiator proteins, it binds directly to the 5'-end of the 23S rRNA, where it nucleates assembly of the 50S subunit. One of the proteins that surrounds the polypeptide exit tunnel on the outside of the subunit. In Shewanella sp. (strain W3-18-1), this protein is Large ribosomal subunit protein uL24.